The sequence spans 412 residues: MGIKGLTKLLAEHAPGAAVRRRVEDYRGRVVAIDTSLSIYQFLIVVGRKGTEVLTNEAGEVTSHLQGMLNRTVRILEAGIKPVFVFDGEPPDMKKKELAKRSLKRDGSSEDLNRAIEVGDEDLIEKFSKRTVKVTKKHNEDCKRLLSLMGVPVVQAPGEAEAQCAALCENHKVFAIASEDMDSLTFGARRFLRHLTDLSFKRSPVTEFEVSKVLEELGLTMDQFIDLCILSGCDYCENIRGIGGQRALKLIRQHGYIEEVVQNLSQTRYSVPEDWPYQEVRALFKEPNVCTDIPDFLWTPPDEEGLINFLAAENNFSPDRVVKSVEKIKAANDKFSLGRGKLLAPVANLTGSTSTAGKEPKCILGGPGQVMKARSPLQVCKSSSLNFIHDNSKAFMLGRRSGFLRISTYASI.

An N-domain region spans residues 1 to 105 (MGIKGLTKLL…KELAKRSLKR (105 aa)). Aspartate 34 serves as a coordination point for Mg(2+). Arginine 71 contacts DNA. Mg(2+) is bound by residues aspartate 87, glutamate 159, glutamate 161, aspartate 180, and aspartate 182. An I-domain region spans residues 123-254 (LIEKFSKRTV…QRALKLIRQH (132 aa)). Position 159 (glutamate 159) interacts with DNA. DNA is bound by residues glycine 232 and aspartate 234. A Mg(2+)-binding site is contributed by aspartate 234.

Belongs to the XPG/RAD2 endonuclease family. FEN1 subfamily. In terms of assembly, interacts with PCNA. Three molecules of FEN1 bind to one PCNA trimer with each molecule binding to one PCNA monomer. PCNA stimulates the nuclease activity without altering cleavage specificity. The cofactor is Mg(2+). Post-translationally, phosphorylated. Phosphorylation upon DNA damage induces relocalization to the nuclear plasma.

The protein resides in the nucleus. It is found in the nucleolus. It localises to the nucleoplasm. The protein localises to the mitochondrion. Its function is as follows. Structure-specific nuclease with 5'-flap endonuclease and 5'-3' exonuclease activities involved in DNA replication and repair. During DNA replication, cleaves the 5'-overhanging flap structure that is generated by displacement synthesis when DNA polymerase encounters the 5'-end of a downstream Okazaki fragment. It enters the flap from the 5'-end and then tracks to cleave the flap base, leaving a nick for ligation. Also involved in the long patch base excision repair (LP-BER) pathway, by cleaving within the apurinic/apyrimidinic (AP) site-terminated flap. Acts as a genome stabilization factor that prevents flaps from equilibrating into structures that lead to duplications and deletions. Also possesses 5'-3' exonuclease activity on nicked or gapped double-stranded DNA, and exhibits RNase H activity. Also involved in replication and repair of rDNA and in repairing mitochondrial DNA. This Oryza sativa subsp. indica (Rice) protein is Flap endonuclease 1-B.